The chain runs to 258 residues: Ciliogenesis and planar polarity effector 2 (258 aa).

The interval Ser-50 to Glu-258 is small GTPase-like. GTP contacts are provided by Ser-64, Gly-65, Gly-67, Lys-68, Thr-69, Ala-70, Val-82, His-84, Thr-87, Lys-176, Asp-178, and Ser-206.

This sequence belongs to the small GTPase superfamily. Rab family. As to quaternary structure, interacts with FUZ. Associates with the CPLANE (ciliogenesis and planar polarity effectors) complex via its interaction with FUZ.

It localises to the cytoplasm. Its subcellular location is the cytoskeleton. The protein localises to the cilium basal body. It is found in the microtubule organizing center. The protein resides in the centrosome. It localises to the centriole. Required for efficient primary cilia initiation, regulating a late step in cilia initiation. Plays a role in the final maturation of the mother centriole and ciliary vesicle that allows extension of the ciliary axoneme. This Homo sapiens (Human) protein is Ciliogenesis and planar polarity effector 2.